We begin with the raw amino-acid sequence, 125 residues long: Somatostatin-2 (125 aa).

An N-terminal signal peptide occupies residues 1 to 24 (MQCIRCPAILALLALVLCGPSVSS). Gln25 is subject to Pyrrolidone carboxylic acid. Residues 25–97 (QLDREQSDNQ…ATGGRMNLER (73 aa)) constitute a propeptide that is removed on maturation. The interval 82-107 (AEDASMATGGRMNLERSVDSTNNLPP) is disordered. A disulfide bridge connects residues Cys114 and Cys125. Lys120 carries the post-translational modification 5-hydroxylysine.

It belongs to the somatostatin family.

It is found in the secreted. Somatostatin inhibits the release of somatotropin. This Lophius americanus (American angler) protein is Somatostatin-2 (sst2).